We begin with the raw amino-acid sequence, 382 residues long: D-galactonate dehydratase (382 aa).

D183 is a binding site for Mg(2+). Residue H185 is the Proton donor of the active site. The Mg(2+) site is built by E209 and E235. H285 serves as the catalytic Proton acceptor.

It belongs to the mandelate racemase/muconate lactonizing enzyme family. GalD subfamily. It depends on Mg(2+) as a cofactor.

It carries out the reaction D-galactonate = 2-dehydro-3-deoxy-D-galactonate + H2O. It participates in carbohydrate acid metabolism; D-galactonate degradation; D-glyceraldehyde 3-phosphate and pyruvate from D-galactonate: step 1/3. Catalyzes the dehydration of D-galactonate to 2-keto-3-deoxy-D-galactonate. The polypeptide is D-galactonate dehydratase (Pectobacterium atrosepticum (strain SCRI 1043 / ATCC BAA-672) (Erwinia carotovora subsp. atroseptica)).